Consider the following 329-residue polypeptide: GTP 3',8-cyclase (329 aa).

The Radical SAM core domain maps to 8 to 234; that stretch reads AFARKFYYLR…QLRQRSDGPA (227 aa). Arg17 contributes to the GTP binding site. [4Fe-4S] cluster is bound by residues Cys24 and Cys28. Tyr30 is a binding site for S-adenosyl-L-methionine. Residue Cys31 participates in [4Fe-4S] cluster binding. Position 68 (Arg68) interacts with GTP. S-adenosyl-L-methionine is bound at residue Gly72. Residue Thr99 coordinates GTP. Ser123 contributes to the S-adenosyl-L-methionine binding site. Lys160 is a GTP binding site. Met194 provides a ligand contact to S-adenosyl-L-methionine. [4Fe-4S] cluster is bound by residues Cys257 and Cys260. GTP is bound at residue 262-264; that stretch reads RLR. Residue Cys274 coordinates [4Fe-4S] cluster.

It belongs to the radical SAM superfamily. MoaA family. In terms of assembly, monomer and homodimer. [4Fe-4S] cluster is required as a cofactor.

It catalyses the reaction GTP + AH2 + S-adenosyl-L-methionine = (8S)-3',8-cyclo-7,8-dihydroguanosine 5'-triphosphate + 5'-deoxyadenosine + L-methionine + A + H(+). It functions in the pathway cofactor biosynthesis; molybdopterin biosynthesis. In terms of biological role, catalyzes the cyclization of GTP to (8S)-3',8-cyclo-7,8-dihydroguanosine 5'-triphosphate. This Salmonella paratyphi B (strain ATCC BAA-1250 / SPB7) protein is GTP 3',8-cyclase.